Here is a 121-residue protein sequence, read N- to C-terminus: Small ribosomal subunit protein uS13 (121 aa).

Residues 94-121 are disordered; sequence GLPVRGQNTKNNSRTRKGPRRTVANKKK. A compositionally biased stretch (basic residues) spans 106–121; it reads SRTRKGPRRTVANKKK.

It belongs to the universal ribosomal protein uS13 family. In terms of assembly, part of the 30S ribosomal subunit. Forms a loose heterodimer with protein S19. Forms two bridges to the 50S subunit in the 70S ribosome.

Located at the top of the head of the 30S subunit, it contacts several helices of the 16S rRNA. In the 70S ribosome it contacts the 23S rRNA (bridge B1a) and protein L5 of the 50S subunit (bridge B1b), connecting the 2 subunits; these bridges are implicated in subunit movement. Contacts the tRNAs in the A and P-sites. This is Small ribosomal subunit protein uS13 from Exiguobacterium sibiricum (strain DSM 17290 / CCUG 55495 / CIP 109462 / JCM 13490 / 255-15).